The primary structure comprises 72 residues: Translation initiation factor IF-1 (72 aa).

The S1-like domain maps to 1 to 72 (MSKEEAIEVE…SRGRITYRAK (72 aa)).

The protein belongs to the IF-1 family. Component of the 30S ribosomal translation pre-initiation complex which assembles on the 30S ribosome in the order IF-2 and IF-3, IF-1 and N-formylmethionyl-tRNA(fMet); mRNA recruitment can occur at any time during PIC assembly.

It is found in the cytoplasm. Functionally, one of the essential components for the initiation of protein synthesis. Stabilizes the binding of IF-2 and IF-3 on the 30S subunit to which N-formylmethionyl-tRNA(fMet) subsequently binds. Helps modulate mRNA selection, yielding the 30S pre-initiation complex (PIC). Upon addition of the 50S ribosomal subunit IF-1, IF-2 and IF-3 are released leaving the mature 70S translation initiation complex. This Geobacter metallireducens (strain ATCC 53774 / DSM 7210 / GS-15) protein is Translation initiation factor IF-1.